Here is a 402-residue protein sequence, read N- to C-terminus: MTDSWTWLQRGTHEIFPDQPESADPDVSLLARLQQGDRPLRIKLGIDPTGSDIHLGHSIIFRKLRQFQDAGHTAVLIIGDFTARIGDPTGKSEVRRQLTAEDVQRNAETYLDQLRPILDFETPGRLEIRYNSEWLAGLDLAKILELLGTMTVGQMLAKEGFSERYDKGTPVYLHEFLYPLMQGYDSVAVQSDVELGGTDQKFNIAVGRDLQRHFGLQPQFGLLLPILIGLDGSQKMSKSLGNYVGLNEDALSMYSKLEKVPDALVADYFELLTSQDLAALPENPRDRQKLLALDVVSQYHGAEAAAAAQKAAQELVQGSAVQAEAVPEFPLSQVNFPAKAFYLVSAVGLGLTSSEARRQIQGGAVRLDGQKLDDPNHIFEAPTALKGRVIQVGKKKFVRLVL.

The 'HIGH' region signature appears at 48–57 (PTGSDIHLGH). Residues 235–239 (KMSKS) carry the 'KMSKS' region motif. Residue lysine 238 coordinates ATP. The S4 RNA-binding domain occupies 338 to 402 (AKAFYLVSAV…GKKKFVRLVL (65 aa)).

The protein belongs to the class-I aminoacyl-tRNA synthetase family. TyrS type 2 subfamily. In terms of assembly, homodimer.

Its subcellular location is the cytoplasm. It carries out the reaction tRNA(Tyr) + L-tyrosine + ATP = L-tyrosyl-tRNA(Tyr) + AMP + diphosphate + H(+). In terms of biological role, catalyzes the attachment of tyrosine to tRNA(Tyr) in a two-step reaction: tyrosine is first activated by ATP to form Tyr-AMP and then transferred to the acceptor end of tRNA(Tyr). This Synechococcus elongatus (strain ATCC 33912 / PCC 7942 / FACHB-805) (Anacystis nidulans R2) protein is Tyrosine--tRNA ligase.